Reading from the N-terminus, the 128-residue chain is Leucine-rich single-pass membrane protein 1 (128 aa).

A Phosphoserine modification is found at serine 24. Residues 65–85 traverse the membrane as a helical segment; that stretch reads VGLIIVLIISLALVSFVIFLI. Residues 87–111 are a coiled coil; sequence QTENKMEDVSRRLAAEGKDIDDLKK.

The protein localises to the membrane. This chain is Leucine-rich single-pass membrane protein 1 (LSMEM1), found in Bos taurus (Bovine).